Here is a 378-residue protein sequence, read N- to C-terminus: MATSHPLAAAAATSSSSATFRPPLRFLSSPPSSLTLNRRRSFPVVCAADADAKETTKKPTIPDKAPAAGSSFNQLLGIKGAKQETNIWKIRLQLTKPVTWPPLVWGVLCGAAASGNFHWTVEDVTKSIVCMLMSGPCLTGYTQTINDWYDRDIDAINEPYRPIPSGAISENEVITQIWVLLLGGLGLGALLDIWAGHDFPIIFYLALGGSLLSYIYSAPPLKLKQNGWIGNFALGASYIGLPWWAGQALFGTLTPDIVVLTCLYSIAGLGIAIVNDFKSIEGDRTLGLQSLPVAFGMETAKWICVGAIDITQLSVAAYLLSTGKLYYALALLGLTIPQVILQFQYFLKDPVKYDVKYQASAQPFFVFGLLVTALATSH.

A chloroplast-targeting transit peptide spans 1-45 (MATSHPLAAAAATSSSSATFRPPLRFLSSPPSSLTLNRRRSFPVV). The next 7 membrane-spanning stretches (helical) occupy residues 173–193 (VITQ…LLDI), 199–219 (FPII…YSAP), 232–252 (FALG…LFGT), 257–277 (IVVL…VNDF), 302–322 (WICV…LLST), 327–347 (YALA…QYFL), and 357–377 (YQAS…LATS).

This sequence belongs to the UbiA prenyltransferase family. Chlorophyll synthase subfamily. Mg(2+) is required as a cofactor. The cofactor is Zn(2+). Requires Mn(2+) as cofactor.

It is found in the plastid. It localises to the chloroplast membrane. The enzyme catalyses phytyl diphosphate + chlorophyllide a + H(+) = chlorophyll a + diphosphate. With respect to regulation, inhibited by N-phenylmaleimide (NPM) and diacetyl. Functionally, involved in one of the last steps of the biosynthesis of chlorophyll a. Catalyzes the esterification of chlorophillide a with either geranylgeranyldiphosphate (GGPP) or phytyldiphosphate (PhyPP). May also use with a lower efficiency the monophosphates GGMP and PhyMP, but not the non-phosphorylated alcohols geranylgeraniol and phytol. The tetraprenyl diphosphate must bind to the enzyme as the first substrate and esterification occurs when this pre-loaded enzyme meets the second substrate, chlorophyllide. This Avena sativa (Oat) protein is Chlorophyll synthase, chloroplastic (CHLG).